Reading from the N-terminus, the 168-residue chain is Desumoylating isopeptidase 1 (168 aa).

The PPPDE domain maps to 7 to 149 (YPVKLYVYDL…FGQALRPFLD (143 aa)). The active site involves His38. The Nuclear export signal 1 signature appears at 83–91 (IFLEYLSSL). Residue Cys108 is part of the active site. Positions 139–153 (PFGQALRPFLDSIQI) match the Nuclear export signal 2 motif.

The protein belongs to the DeSI family. As to quaternary structure, homodimer. Interacts with UBQLN4; leading to the export of UBQLN4 from the nucleus.

Its subcellular location is the cytoplasm. It localises to the nucleus. The enzyme catalyses S-hexadecanoyl-L-cysteinyl-[protein] + H2O = L-cysteinyl-[protein] + hexadecanoate + H(+). Protease which deconjugates SUMO1, SUMO2 and SUMO3 from some substrate proteins. Has isopeptidase but not SUMO-processing activity. Desumoylates ZBTB46. Collaborates with UBQLN4 in the export of ubiquitinated proteins from the nucleus to the cytoplasm. Exhibits palmitoyl protein thioesterase (S-depalmitoylation) activity towards synthetic substrates 4-methylumbelliferyl-6-S-palmitoyl-beta-D-glucopyranoside and S-depalmitoylation probe 5 (DPP-5). In Rattus norvegicus (Rat), this protein is Desumoylating isopeptidase 1 (Desi1).